The following is a 133-amino-acid chain: Large ribosomal subunit protein bL12 (133 aa).

This sequence belongs to the bacterial ribosomal protein bL12 family. As to quaternary structure, homodimer. Part of the ribosomal stalk of the 50S ribosomal subunit. Forms a multimeric L10(L12)X complex, where L10 forms an elongated spine to which 2 to 4 L12 dimers bind in a sequential fashion. Binds GTP-bound translation factors.

In terms of biological role, forms part of the ribosomal stalk which helps the ribosome interact with GTP-bound translation factors. Is thus essential for accurate translation. This is Large ribosomal subunit protein bL12 from Trichodesmium erythraeum (strain IMS101).